Reading from the N-terminus, the 255-residue chain is tRNA (guanine-N(7)-)-methyltransferase (255 aa).

The disordered stretch occupies residues 1-35 (MTRTNDASGGGKLPRKRFYRARAHSNPLSDSHFPV). Positions 13–23 (LPRKRFYRARA) are enriched in basic residues. Residues glycine 75, 98-99 (EL), 131-132 (NS), and leucine 151 each bind S-adenosyl-L-methionine. Aspartate 154 is an active-site residue. 229–231 (TEE) lines the S-adenosyl-L-methionine pocket.

The protein belongs to the class I-like SAM-binding methyltransferase superfamily. TrmB family.

It localises to the nucleus. The enzyme catalyses guanosine(46) in tRNA + S-adenosyl-L-methionine = N(7)-methylguanosine(46) in tRNA + S-adenosyl-L-homocysteine. It participates in tRNA modification; N(7)-methylguanine-tRNA biosynthesis. Catalyzes the formation of N(7)-methylguanine at position 46 (m7G46) in tRNA. This is tRNA (guanine-N(7)-)-methyltransferase from Zea mays (Maize).